A 128-amino-acid polypeptide reads, in one-letter code: UPF0102 protein KPN78578_35270 (128 aa).

The interval 1–20 (MAQVPAGKNRSGQLSKQTGD) is disordered.

This sequence belongs to the UPF0102 family.

The sequence is that of UPF0102 protein KPN78578_35270 from Klebsiella pneumoniae subsp. pneumoniae (strain ATCC 700721 / MGH 78578).